Here is a 169-residue protein sequence, read N- to C-terminus: Procalin (169 aa).

The first 18 residues, 1 to 18, serve as a signal peptide directing secretion; it reads MKTFIVITFIGILSYAYA. Cystine bridges form between Cys21–Cys125, Cys54–Cys168, and Cys83–Cys97.

Belongs to the calycin superfamily. Triabin family. As to expression, expressed in salivary glands.

The protein resides in the secreted. The sequence is that of Procalin from Hospesneotomae protracta (Western bloodsucking conenose).